A 114-amino-acid chain; its full sequence is MSLGLLCCVAFSLLWAGPMNAGVTQTPKFHVLKTGQSMTLLCAQDMNHEYMYRYRQDPGKGLRLIYYSVAAALTDKGEVPNGYNVSRSNTEDFPLKLESAAPSQTSVYFCASSY.

A signal peptide spans 1 to 21; that stretch reads MSLGLLCCVAFSLLWAGPMNA. Positions 22 to 114 constitute an Ig-like domain; it reads GVTQTPKFHV…TSVYFCASSY (93 aa). A disulfide bridge connects residues Cys42 and Cys110. A glycan (N-linked (GlcNAc...) asparagine) is linked at Asn84.

In terms of assembly, alpha-beta TR is a heterodimer composed of an alpha and beta chain; disulfide-linked. The alpha-beta TR is associated with the transmembrane signaling CD3 coreceptor proteins to form the TR-CD3 (TcR or TCR). The assembly of alpha-beta TR heterodimers with CD3 occurs in the endoplasmic reticulum where a single alpha-beta TR heterodimer associates with one CD3D-CD3E heterodimer, one CD3G-CD3E heterodimer and one CD247 homodimer forming a stable octameric structure. CD3D-CD3E and CD3G-CD3E heterodimers preferentially associate with TR alpha and TR beta chains, respectively. The association of the CD247 homodimer is the last step of TcR assembly in the endoplasmic reticulum and is required for transport to the cell surface.

The protein localises to the cell membrane. In terms of biological role, probable non-functional open reading frame (ORF) of V region of the variable domain of T cell receptor (TR) beta chain. Non-functional ORF generally cannot participate in the synthesis of a productive T cell receptor (TR) chain due to altered V-(D)-J or switch recombination and/or splicing site (at mRNA level) and/or conserved amino acid change (protein level). Alpha-beta T cell receptors are antigen specific receptors which are essential to the immune response and are present on the cell surface of T lymphocytes. Recognize peptide-major histocompatibility (MH) (pMH) complexes that are displayed by antigen presenting cells (APC), a prerequisite for efficient T cell adaptive immunity against pathogens. Binding of alpha-beta TR to pMH complex initiates TR-CD3 clustering on the cell surface and intracellular activation of LCK that phosphorylates the ITAM motifs of CD3G, CD3D, CD3E and CD247 enabling the recruitment of ZAP70. In turn ZAP70 phosphorylates LAT, which recruits numerous signaling molecules to form the LAT signalosome. The LAT signalosome propagates signal branching to three major signaling pathways, the calcium, the mitogen-activated protein kinase (MAPK) kinase and the nuclear factor NF-kappa-B (NF-kB) pathways, leading to the mobilization of transcription factors that are critical for gene expression and essential for T cell growth and differentiation. The T cell repertoire is generated in the thymus, by V-(D)-J rearrangement. This repertoire is then shaped by intrathymic selection events to generate a peripheral T cell pool of self-MH restricted, non-autoaggressive T cells. Post-thymic interaction of alpha-beta TR with the pMH complexes shapes TR structural and functional avidity. The polypeptide is Probable non-functional T cell receptor beta variable 6-7 (Homo sapiens (Human)).